A 122-amino-acid chain; its full sequence is MICOS complex subunit MIC13 homolog QIL1 (122 aa).

The helical transmembrane segment at 9-25 (GGLVAATVYYTQKVGIW) threads the bilayer.

This sequence belongs to the MICOS complex subunit Mic13 family. In terms of assembly, component of the mitochondrial contact site and cristae organizing system (MICOS) complex.

It is found in the mitochondrion inner membrane. In terms of biological role, component of the MICOS complex, a large protein complex of the mitochondrial inner membrane that plays crucial roles in the maintenance of crista junctions, inner membrane architecture, and formation of contact sites to the outer membrane. The chain is MICOS complex subunit MIC13 homolog QIL1 from Drosophila melanogaster (Fruit fly).